Consider the following 164-residue polypeptide: MTQITFKNNPIHLAGSEVSEGQHAPDFKVLDNDLNEVSLENYKGQKKLISVVPSIDTGVCDQQTRKFNEEAAQEDGVVLTISADLPFAQKRWCASNGLDNVITLSDHKDLSFGQQYGVVMEELRLLARSVFVLDSNDKVVYKELVSEGTDFPNFDAALEAYRNI.

The region spanning 18–163 (VSEGQHAPDF…FDAALEAYRN (146 aa)) is the Thioredoxin domain. Catalysis depends on Cys-60, which acts as the Cysteine sulfenic acid (-SOH) intermediate. The cysteines at positions 60 and 93 are disulfide-linked.

The protein belongs to the peroxiredoxin family. Tpx subfamily. In terms of assembly, homodimer.

The enzyme catalyses a hydroperoxide + [thioredoxin]-dithiol = an alcohol + [thioredoxin]-disulfide + H2O. Functionally, thiol-specific peroxidase that catalyzes the reduction of hydrogen peroxide and organic hydroperoxides to water and alcohols, respectively. Plays a role in cell protection against oxidative stress by detoxifying peroxides. This chain is Thiol peroxidase, found in Staphylococcus haemolyticus (strain JCSC1435).